The primary structure comprises 159 residues: Phosphopantetheine adenylyltransferase (159 aa).

T9 is a binding site for substrate. ATP contacts are provided by residues 9 to 10 (TF) and H17. Positions 41, 73, and 87 each coordinate substrate. Residues 88-90 (GLR), E98, and 123-129 (YSFISST) contribute to the ATP site.

It belongs to the bacterial CoaD family. As to quaternary structure, homohexamer. Mg(2+) is required as a cofactor.

It localises to the cytoplasm. It carries out the reaction (R)-4'-phosphopantetheine + ATP + H(+) = 3'-dephospho-CoA + diphosphate. It participates in cofactor biosynthesis; coenzyme A biosynthesis; CoA from (R)-pantothenate: step 4/5. Functionally, reversibly transfers an adenylyl group from ATP to 4'-phosphopantetheine, yielding dephospho-CoA (dPCoA) and pyrophosphate. The chain is Phosphopantetheine adenylyltransferase from Pseudomonas syringae pv. tomato (strain ATCC BAA-871 / DC3000).